A 664-amino-acid chain; its full sequence is Lamin tail domain-containing protein 2 (664 aa).

Residues 1 to 40 are disordered; the sequence is MAPKSCQESEDKQVSPAPAGVQPDSSDLGSPVGTPVDRVA. A coiled-coil region spans residues 118 to 169; sequence QDKFLRNQVQKLTLELKAQKEQAQQEKQQLEEKLQQNLWAKQQLEAELQTFQ. Residues 245-260 are compositionally biased toward polar residues; sequence SDQKQSQPPTSETYTL. Disordered regions lie at residues 245–272 and 286–329; these read SDQKQSQPPTSETYTLDSEGATKHTEKP and TSSS…MQEH. A compositionally biased stretch (low complexity) spans 286 to 298; that stretch reads TSSSERTQSDTSS. Over residues 312–325 the composition is skewed to polar residues; that stretch reads GHPSQGTNLASSEQ. The region spanning 362-481 is the LTD domain; sequence PYTRPQLNPF…QVLSEHQATP (120 aa). Residues 504-563 form a disordered region; the sequence is SESEPDVHPGEQQCRPSSPQKGRAKDAGARRKKPGPGVRQHRHSSTSGLRASRTLHPTET. Residues 533 to 547 show a composition bias toward basic residues; the sequence is RRKKPGPGVRQHRHS.

This is Lamin tail domain-containing protein 2 (Lmntd2) from Mus musculus (Mouse).